A 417-amino-acid polypeptide reads, in one-letter code: NADH-quinone oxidoreductase subunit D (417 aa).

It belongs to the complex I 49 kDa subunit family. NDH-1 is composed of 14 different subunits. Subunits NuoB, C, D, E, F, and G constitute the peripheral sector of the complex.

It is found in the cell inner membrane. The enzyme catalyses a quinone + NADH + 5 H(+)(in) = a quinol + NAD(+) + 4 H(+)(out). Its function is as follows. NDH-1 shuttles electrons from NADH, via FMN and iron-sulfur (Fe-S) centers, to quinones in the respiratory chain. The immediate electron acceptor for the enzyme in this species is believed to be ubiquinone. Couples the redox reaction to proton translocation (for every two electrons transferred, four hydrogen ions are translocated across the cytoplasmic membrane), and thus conserves the redox energy in a proton gradient. The sequence is that of NADH-quinone oxidoreductase subunit D from Albidiferax ferrireducens (strain ATCC BAA-621 / DSM 15236 / T118) (Rhodoferax ferrireducens).